The following is a 163-amino-acid chain: RNA pyrophosphohydrolase (163 aa).

The region spanning 6-149 is the Nudix hydrolase domain; that stretch reads GYRLNVGIVI…KRDVYRQVMK (144 aa). The short motif at 38–59 is the Nudix box element; sequence GGIHLTESPEEAMYRELFEELG.

Belongs to the Nudix hydrolase family. RppH subfamily. The cofactor is a divalent metal cation.

In terms of biological role, accelerates the degradation of transcripts by removing pyrophosphate from the 5'-end of triphosphorylated RNA, leading to a more labile monophosphorylated state that can stimulate subsequent ribonuclease cleavage. The polypeptide is RNA pyrophosphohydrolase (Hamiltonella defensa subsp. Acyrthosiphon pisum (strain 5AT)).